The following is a 511-amino-acid chain: Chromosomal replication initiator protein DnaA (511 aa).

Residues 1–90 are domain I, interacts with DnaA modulators; sequence MSVELWQQCV…RRSSAPRAAP (90 aa). A domain II region spans residues 91-174; sequence NAPVSAAMAA…QVEGALKHTS (84 aa). A disordered region spans residues 125–161; sequence TAEPAQASDMAEASSRDSYDSMADSAPAPVAPGRTEQ. The tract at residues 175–391 is domain III, AAA+ region; it reads YLNRTFTFET…GALKRVIAHS (217 aa). ATP-binding residues include glycine 219, glycine 221, lysine 222, and threonine 223. The domain IV, binds dsDNA stretch occupies residues 392–511; it reads HFMGRDITIE…YKNLLRTLTT (120 aa).

The protein belongs to the DnaA family. As to quaternary structure, oligomerizes as a right-handed, spiral filament on DNA at oriC.

The protein localises to the cytoplasm. Functionally, plays an essential role in the initiation and regulation of chromosomal replication. ATP-DnaA binds to the origin of replication (oriC) to initiate formation of the DNA replication initiation complex once per cell cycle. Binds the DnaA box (a 9 base pair repeat at the origin) and separates the double-stranded (ds)DNA. Forms a right-handed helical filament on oriC DNA; dsDNA binds to the exterior of the filament while single-stranded (ss)DNA is stabiized in the filament's interior. The ATP-DnaA-oriC complex binds and stabilizes one strand of the AT-rich DNA unwinding element (DUE), permitting loading of DNA polymerase. After initiation quickly degrades to an ADP-DnaA complex that is not apt for DNA replication. Binds acidic phospholipids. This is Chromosomal replication initiator protein DnaA from Pseudomonas putida (strain W619).